The following is a 513-amino-acid chain: Zinc finger CCCH-type with G patch domain-containing protein (513 aa).

Residues 155–178 (PCSYYLEGECRFDEAKCRFSHGAL) form a C3H1-type zinc finger. Acidic residues predominate over residues 252–261 (DQDEDDELSS). A disordered region spans residues 252 to 283 (DQDEDDELSSEESNSSMNDNSSDEAESDMDDL). Over residues 262 to 271 (EESNSSMNDN) the composition is skewed to low complexity. Over residues 272–283 (SSDEAESDMDDL) the composition is skewed to acidic residues. The G-patch domain occupies 312–358 (TRGIGSKLMEKMGYIHGTGLGSDGRGIVTPVSAQILPQGRSLDACME). Over residues 478–495 (VQMQSHKQELATLQAQER) the composition is skewed to polar residues. The interval 478-513 (VQMQSHKQELATLQAQERSLSKEQQTRKSKNKMFEF) is disordered. Basic and acidic residues predominate over residues 496–513 (SLSKEQQTRKSKNKMFEF).

It localises to the nucleus. In terms of biological role, transcription repressor. The protein is Zinc finger CCCH-type with G patch domain-containing protein of Drosophila melanogaster (Fruit fly).